Consider the following 542-residue polypeptide: Putative serine/threonine-protein kinase L205 (542 aa).

Over residues 20–30 (FEKKSVGHNSD) the composition is skewed to basic and acidic residues. The tract at residues 20–49 (FEKKSVGHNSDDEYDDTVPYNEDDETSEEE) is disordered. The span at 31–49 (DEYDDTVPYNEDDETSEEE) shows a compositional bias: acidic residues. Residues 69–538 (YLLLKKIGSG…ADELLKHPWL (470 aa)) form the Protein kinase domain. ATP-binding positions include 75-83 (IGSGNNASV) and K98. D201 (proton acceptor) is an active-site residue. The interval 278–314 (EELIPDDPDNNEKYYDSTDSEEYDYSDNSDYYDDDED) is disordered. Positions 295 to 314 (TDSEEYDYSDNSDYYDDDED) are enriched in acidic residues.

It belongs to the protein kinase superfamily. Ser/Thr protein kinase family.

It catalyses the reaction L-seryl-[protein] + ATP = O-phospho-L-seryl-[protein] + ADP + H(+). It carries out the reaction L-threonyl-[protein] + ATP = O-phospho-L-threonyl-[protein] + ADP + H(+). The polypeptide is Putative serine/threonine-protein kinase L205 (Acanthamoeba polyphaga (Amoeba)).